We begin with the raw amino-acid sequence, 142 residues long: Large ribosomal subunit protein uL13 (142 aa).

Belongs to the universal ribosomal protein uL13 family. Part of the 50S ribosomal subunit.

This protein is one of the early assembly proteins of the 50S ribosomal subunit, although it is not seen to bind rRNA by itself. It is important during the early stages of 50S assembly. The sequence is that of Large ribosomal subunit protein uL13 from Bordetella avium (strain 197N).